The chain runs to 623 residues: Putative chaperone protein ClpB2, chloroplastic (623 aa).

One can recognise a Clp R domain in the interval 1-123; sequence MNDLKFDPNV…KSEVEKLRGE (123 aa). Repeat regions lie at residues 6–71 and 77–123; these read FDPN…NQSL and RNLG…LRGE. Residues 129–375 form an i region; it reads LKTYGTDLVE…HVKAQLDIQP (247 aa). 172-179 is a binding site for ATP; the sequence is GEPGVGKT. A coiled-coil region spans residues 368–462; the sequence is KAQLDIQPEE…LQEAERQHDV (95 aa). ATP is bound at residue 571–578; sequence GPTGVGKT.

This sequence belongs to the ClpA/ClpB family.

This Arabidopsis thaliana (Mouse-ear cress) protein is Putative chaperone protein ClpB2, chloroplastic (CLPB2).